Reading from the N-terminus, the 114-residue chain is Protein S40-2 (114 aa).

The tract at residues 23–50 (RYTKLYNSRNDEKKGTRRHETAEKTSPV) is disordered. Residues 31-45 (RNDEKKGTRRHETAE) are compositionally biased toward basic and acidic residues.

This sequence belongs to the senescence regulator S40 family.

It localises to the cytoplasm. The sequence is that of Protein S40-2 from Arabidopsis thaliana (Mouse-ear cress).